Here is a 435-residue protein sequence, read N- to C-terminus: Methylenetetrahydrofolate--tRNA-(uracil-5-)-methyltransferase TrmFO (435 aa).

Residue 9–14 (GGGLAG) participates in FAD binding.

It belongs to the MnmG family. TrmFO subfamily. FAD serves as cofactor.

The protein localises to the cytoplasm. The catalysed reaction is uridine(54) in tRNA + (6R)-5,10-methylene-5,6,7,8-tetrahydrofolate + NADH + H(+) = 5-methyluridine(54) in tRNA + (6S)-5,6,7,8-tetrahydrofolate + NAD(+). The enzyme catalyses uridine(54) in tRNA + (6R)-5,10-methylene-5,6,7,8-tetrahydrofolate + NADPH + H(+) = 5-methyluridine(54) in tRNA + (6S)-5,6,7,8-tetrahydrofolate + NADP(+). Catalyzes the folate-dependent formation of 5-methyl-uridine at position 54 (M-5-U54) in all tRNAs. The polypeptide is Methylenetetrahydrofolate--tRNA-(uracil-5-)-methyltransferase TrmFO (Citrifermentans bemidjiense (strain ATCC BAA-1014 / DSM 16622 / JCM 12645 / Bem) (Geobacter bemidjiensis)).